The following is a 417-amino-acid chain: Histidine--tRNA ligase (417 aa).

Belongs to the class-II aminoacyl-tRNA synthetase family. In terms of assembly, homodimer.

Its subcellular location is the cytoplasm. It catalyses the reaction tRNA(His) + L-histidine + ATP = L-histidyl-tRNA(His) + AMP + diphosphate + H(+). In Nitratidesulfovibrio vulgaris (strain ATCC 29579 / DSM 644 / CCUG 34227 / NCIMB 8303 / VKM B-1760 / Hildenborough) (Desulfovibrio vulgaris), this protein is Histidine--tRNA ligase.